A 292-amino-acid chain; its full sequence is Sulfofructosephosphate aldolase (292 aa).

Residue K193 is the Schiff-base intermediate with substrate of the active site.

This sequence belongs to the aldolase LacD family. Homotetramer.

It carries out the reaction 6-deoxy-6-sulfo-D-fructose 1-phosphate = (2S)-3-sulfolactaldehyde + dihydroxyacetone phosphate. Functionally, cleaves 6-deoxy-6-sulfo-D-fructose 1-phosphate (SFP) to form dihydroxyacetone phosphate (DHAP) and 3-sulfolactaldehyde (SLA). The sequence is that of Sulfofructosephosphate aldolase (yihT) from Salmonella typhi.